A 381-amino-acid polypeptide reads, in one-letter code: S-adenosylmethionine synthase (381 aa).

Histidine 15 contacts ATP. A Mg(2+)-binding site is contributed by aspartate 17. A K(+)-binding site is contributed by glutamate 43. L-methionine contacts are provided by glutamate 56 and glutamine 99. The flexible loop stretch occupies residues 99–109; that stretch reads QSLDIAQGVDN. ATP is bound by residues 164-166, 230-231, aspartate 239, 245-246, and lysine 266; these read DGK, RF, and RK. An L-methionine-binding site is contributed by aspartate 239. Lysine 270 lines the L-methionine pocket.

Belongs to the AdoMet synthase family. Homotetramer; dimer of dimers. Mg(2+) serves as cofactor. The cofactor is K(+).

The protein localises to the cytoplasm. It catalyses the reaction L-methionine + ATP + H2O = S-adenosyl-L-methionine + phosphate + diphosphate. Its pathway is amino-acid biosynthesis; S-adenosyl-L-methionine biosynthesis; S-adenosyl-L-methionine from L-methionine: step 1/1. Functionally, catalyzes the formation of S-adenosylmethionine (AdoMet) from methionine and ATP. The overall synthetic reaction is composed of two sequential steps, AdoMet formation and the subsequent tripolyphosphate hydrolysis which occurs prior to release of AdoMet from the enzyme. This Legionella jeonii protein is S-adenosylmethionine synthase.